Reading from the N-terminus, the 486-residue chain is MKKIEIEPMTRLEGHGKIAIFLDDKGNVADAFYQIVEFRGYETFLRGLPIEEVPRTVSTICGVCRAVHHTASTKASDGVYGVEPTETAKKIRELYLNAHYVEDHCAILYALGLPDFVVGIEADPAERNLVGLIKKVGVDVGKTVLKKRFAAVKVLEMLGGKPIHPVAGLPGGWSKRITEDERKEIEALAKEMVELGELTLQVFEDVILKNEKLLELITADYYRVVVNYLGTVDDAGKVNYYDGWQVGIDTKGNEVFRFKGKDYLNYIAERVVPWSYVKMPYFKQLGWKGFVDGEGTSLYSVGPLARCNIGDMNTPKAKEAQEKMFDVLKERPIHYIMAYHWARAVELLNAAERVLELAQDPEITSPDVRAELGEVTGEGVGIIEAPRGTLIHHYKTDENGIVTDANLIVATTHNHAPINIAIKKAAQHFIQENKEINDKLLNYVEIAYRPYDICQACASHALPGRYPLEVLVYDSEGELIKTIRNF.

Residues C61 and C64 each contribute to the Ni(2+) site.

The protein belongs to the [NiFe]/[NiFeSe] hydrogenase large subunit family. In terms of assembly, the F420-non-reducing hydrogenase is composed of three subunits; MvhA, MvhD and MvhG. It forms a complex with the heterodisulfide reductase (Hdr). Ni(2+) serves as cofactor.

The protein localises to the cytoplasm. In terms of biological role, part of a complex that provides reducing equivalents for heterodisulfide reductase. In Archaeoglobus profundus (strain DSM 5631 / JCM 9629 / NBRC 100127 / Av18), this protein is F420-non-reducing hydrogenase iron-sulfur subunit A (mvhA).